We begin with the raw amino-acid sequence, 307 residues long: tRNA N6-adenosine threonylcarbamoyltransferase (307 aa).

Residues histidine 108 and histidine 112 each coordinate Fe cation. Residues 131 to 135 (IVSGG), aspartate 164, glycine 177, aspartate 181, and asparagine 266 contribute to the substrate site. Aspartate 290 contacts Fe cation.

The protein belongs to the KAE1 / TsaD family. It depends on Fe(2+) as a cofactor.

Its subcellular location is the cytoplasm. The enzyme catalyses L-threonylcarbamoyladenylate + adenosine(37) in tRNA = N(6)-L-threonylcarbamoyladenosine(37) in tRNA + AMP + H(+). Required for the formation of a threonylcarbamoyl group on adenosine at position 37 (t(6)A37) in tRNAs that read codons beginning with adenine. Is involved in the transfer of the threonylcarbamoyl moiety of threonylcarbamoyl-AMP (TC-AMP) to the N6 group of A37, together with TsaE and TsaB. TsaD likely plays a direct catalytic role in this reaction. In Mycoplasmopsis synoviae (strain 53) (Mycoplasma synoviae), this protein is tRNA N6-adenosine threonylcarbamoyltransferase.